The chain runs to 182 residues: Large ribosomal subunit protein uL6 (182 aa).

Belongs to the universal ribosomal protein uL6 family. As to quaternary structure, part of the 50S ribosomal subunit.

In terms of biological role, this protein binds to the 23S rRNA, and is important in its secondary structure. It is located near the subunit interface in the base of the L7/L12 stalk, and near the tRNA binding site of the peptidyltransferase center. This Trichormus variabilis (strain ATCC 29413 / PCC 7937) (Anabaena variabilis) protein is Large ribosomal subunit protein uL6.